A 364-amino-acid polypeptide reads, in one-letter code: Fructose-1,6-bisphosphatase class 1 3 (364 aa).

Positions 101, 123, 125, and 126 each coordinate Mg(2+). Substrate-binding positions include 126–129 and Asn218; that span reads DGSS. Glu290 provides a ligand contact to Mg(2+).

This sequence belongs to the FBPase class 1 family. Homotetramer. Mg(2+) serves as cofactor.

It localises to the cytoplasm. The enzyme catalyses beta-D-fructose 1,6-bisphosphate + H2O = beta-D-fructose 6-phosphate + phosphate. It participates in carbohydrate biosynthesis; gluconeogenesis. The protein is Fructose-1,6-bisphosphatase class 1 3 of Cupriavidus necator (strain ATCC 17699 / DSM 428 / KCTC 22496 / NCIMB 10442 / H16 / Stanier 337) (Ralstonia eutropha).